A 112-amino-acid chain; its full sequence is Photosystem II reaction center Psb28 protein (112 aa).

This sequence belongs to the Psb28 family. In terms of assembly, part of the photosystem II complex.

Its subcellular location is the plastid. It is found in the cyanelle thylakoid membrane. The sequence is that of Photosystem II reaction center Psb28 protein from Cyanophora paradoxa.